A 240-amino-acid chain; its full sequence is Biosynthetic peptidoglycan transglycosylase (240 aa).

A helical transmembrane segment spans residues 9-31; it reads FLNVVKWFAIASVLLVLLFRVVP.

The protein belongs to the glycosyltransferase 51 family.

The protein localises to the cell inner membrane. The catalysed reaction is [GlcNAc-(1-&gt;4)-Mur2Ac(oyl-L-Ala-gamma-D-Glu-L-Lys-D-Ala-D-Ala)](n)-di-trans,octa-cis-undecaprenyl diphosphate + beta-D-GlcNAc-(1-&gt;4)-Mur2Ac(oyl-L-Ala-gamma-D-Glu-L-Lys-D-Ala-D-Ala)-di-trans,octa-cis-undecaprenyl diphosphate = [GlcNAc-(1-&gt;4)-Mur2Ac(oyl-L-Ala-gamma-D-Glu-L-Lys-D-Ala-D-Ala)](n+1)-di-trans,octa-cis-undecaprenyl diphosphate + di-trans,octa-cis-undecaprenyl diphosphate + H(+). The protein operates within cell wall biogenesis; peptidoglycan biosynthesis. In terms of biological role, peptidoglycan polymerase that catalyzes glycan chain elongation from lipid-linked precursors. The sequence is that of Biosynthetic peptidoglycan transglycosylase from Pseudomonas fluorescens (strain SBW25).